The chain runs to 446 residues: tRNA(Ile2) 2-agmatinylcytidine synthetase TiaS (446 aa).

Belongs to the TiaS family.

It is found in the cytoplasm. It catalyses the reaction cytidine(34) in tRNA(Ile2) + agmatine + ATP + H2O = 2-agmatinylcytidine(34) in tRNA(Ile2) + AMP + 2 phosphate + 2 H(+). ATP-dependent agmatine transferase that catalyzes the formation of 2-agmatinylcytidine (agm2C) at the wobble position (C34) of tRNA(Ile2), converting the codon specificity from AUG to AUA. In Cenarchaeum symbiosum (strain A), this protein is tRNA(Ile2) 2-agmatinylcytidine synthetase TiaS.